Here is a 219-residue protein sequence, read N- to C-terminus: 2-C-methyl-D-erythritol 4-phosphate cytidylyltransferase (219 aa).

It belongs to the IspD/TarI cytidylyltransferase family. IspD subfamily.

It carries out the reaction 2-C-methyl-D-erythritol 4-phosphate + CTP + H(+) = 4-CDP-2-C-methyl-D-erythritol + diphosphate. The protein operates within isoprenoid biosynthesis; isopentenyl diphosphate biosynthesis via DXP pathway; isopentenyl diphosphate from 1-deoxy-D-xylulose 5-phosphate: step 2/6. In terms of biological role, catalyzes the formation of 4-diphosphocytidyl-2-C-methyl-D-erythritol from CTP and 2-C-methyl-D-erythritol 4-phosphate (MEP). This is 2-C-methyl-D-erythritol 4-phosphate cytidylyltransferase from Bacteroides thetaiotaomicron (strain ATCC 29148 / DSM 2079 / JCM 5827 / CCUG 10774 / NCTC 10582 / VPI-5482 / E50).